Consider the following 178-residue polypeptide: Transcription factor E (178 aa).

One can recognise an HTH TFE/IIEalpha-type domain in the interval 4-88; the sequence is AEDLFINLAK…YWKPNIDQIN (85 aa).

This sequence belongs to the TFE family. Monomer. Interaction with RNA polymerase subunits RpoF and RpoE is necessary for Tfe stimulatory transcription activity. Able to interact with Tbp and RNA polymerase in the absence of DNA promoter. Interacts both with the preinitiation and elongation complexes.

In terms of biological role, transcription factor that plays a role in the activation of archaeal genes transcribed by RNA polymerase. Facilitates transcription initiation by enhancing TATA-box recognition by TATA-box-binding protein (Tbp), and transcription factor B (Tfb) and RNA polymerase recruitment. Not absolutely required for transcription in vitro, but particularly important in cases where Tbp or Tfb function is not optimal. It dynamically alters the nucleic acid-binding properties of RNA polymerases by stabilizing the initiation complex and destabilizing elongation complexes. Seems to translocate with the RNA polymerase following initiation and acts by binding to the non template strand of the transcription bubble in elongation complexes. This is Transcription factor E from Saccharolobus islandicus (strain L.S.2.15 / Lassen #1) (Sulfolobus islandicus).